Consider the following 160-residue polypeptide: Major allergen Pru av 1 (160 aa).

Belongs to the BetVI family.

This is Major allergen Pru av 1 (PRUA1) from Prunus avium (Cherry).